We begin with the raw amino-acid sequence, 145 residues long: D-aminoacyl-tRNA deacylase (145 aa).

The Gly-cisPro motif, important for rejection of L-amino acids motif lies at 137–138; the sequence is GP.

Belongs to the DTD family. In terms of assembly, homodimer.

It is found in the cytoplasm. It carries out the reaction glycyl-tRNA(Ala) + H2O = tRNA(Ala) + glycine + H(+). The enzyme catalyses a D-aminoacyl-tRNA + H2O = a tRNA + a D-alpha-amino acid + H(+). In terms of biological role, an aminoacyl-tRNA editing enzyme that deacylates mischarged D-aminoacyl-tRNAs. Also deacylates mischarged glycyl-tRNA(Ala), protecting cells against glycine mischarging by AlaRS. Acts via tRNA-based rather than protein-based catalysis; rejects L-amino acids rather than detecting D-amino acids in the active site. By recycling D-aminoacyl-tRNA to D-amino acids and free tRNA molecules, this enzyme counteracts the toxicity associated with the formation of D-aminoacyl-tRNA entities in vivo and helps enforce protein L-homochirality. The chain is D-aminoacyl-tRNA deacylase from Escherichia coli O139:H28 (strain E24377A / ETEC).